The primary structure comprises 209 residues: Kynurenine formamidase (209 aa).

A substrate-binding site is contributed by tryptophan 18. The Zn(2+) site is built by histidine 48, histidine 52, and aspartate 54. Histidine 58 acts as the Proton donor/acceptor in catalysis. Zn(2+) is bound by residues histidine 160 and glutamate 172.

It belongs to the Cyclase 1 superfamily. KynB family. Homodimer. Zn(2+) serves as cofactor.

The catalysed reaction is N-formyl-L-kynurenine + H2O = L-kynurenine + formate + H(+). It participates in amino-acid degradation; L-tryptophan degradation via kynurenine pathway; L-kynurenine from L-tryptophan: step 2/2. In terms of biological role, catalyzes the hydrolysis of N-formyl-L-kynurenine to L-kynurenine, the second step in the kynurenine pathway of tryptophan degradation. The polypeptide is Kynurenine formamidase (Sphingopyxis alaskensis (strain DSM 13593 / LMG 18877 / RB2256) (Sphingomonas alaskensis)).